A 278-amino-acid chain; its full sequence is Cell division protein FtsQ (278 aa).

Residues Met1 to Arg6 are Cytoplasmic-facing. A helical membrane pass occupies residues Ile7–Gly27. Residues Trp28–Thr278 are Periplasmic-facing. The POTRA domain maps to Trp34 to His103.

It belongs to the FtsQ/DivIB family. FtsQ subfamily. As to quaternary structure, part of a complex composed of FtsB, FtsL and FtsQ.

The protein localises to the cell inner membrane. Its function is as follows. Essential cell division protein. May link together the upstream cell division proteins, which are predominantly cytoplasmic, with the downstream cell division proteins, which are predominantly periplasmic. May control correct divisome assembly. The protein is Cell division protein FtsQ of Xanthomonas campestris pv. campestris (strain ATCC 33913 / DSM 3586 / NCPPB 528 / LMG 568 / P 25).